A 423-amino-acid chain; its full sequence is Nucleoporin NUP42 (423 aa).

Residues 1–25 form a C3H1-type zinc finger; that stretch reads MAICQFFLQGRCRFGDRCWNEHPGA. The FG 1 repeat unit spans residues 14-15; that stretch reads FG. The tract at residues 24–85 is disordered; that stretch reads GARGAGGGRQ…EKPYFSSFDS (62 aa). Residues 40-69 show a composition bias toward polar residues; it reads SGNNRRGWNTTSQRYSNVIQPSSFSKSTPW. The interaction with HIV-1 Vpr stretch occupies residues 94–170; the sequence is GFGLSENPFA…EYHNFLTSNN (77 aa). The stretch at 95–96 is one FG 2 repeat; sequence FG. At Ser-106 the chain carries Phosphoserine. FG repeat units follow at residues 218 to 219, 220 to 221, 265 to 266, 271 to 272, 288 to 289, 290 to 291, 311 to 312, 336 to 337, 345 to 346, and 364 to 365; these read FG. Positions 365-423 are interaction with GLE1; that stretch reads GNSSISTSLSASSSIIATDNVLFTPRDKLTVEELEQFQSKKFTLGKIPLKPPPLELLNV.

Probable component of the nuclear pore complex (NPC). Interacts with nuclear export protein NXF1. Interacts with GLE1. Able to form a heterotrimer with NUP155 and GLE1 in vitro. Interacts with XPO1. As to quaternary structure, (Microbial infection) Interacts with the HIV-1 virus proteins Rev and Vpr. The interaction with HIV-1 Rev, a protein that mediates nuclear export of unspliced viral RNAs, suggests that its function may be bypassed by the HIV-1 virus. O-glycosylated. In terms of tissue distribution, ubiquitously expressed.

Its subcellular location is the nucleus. It localises to the nuclear pore complex. It is found in the nucleus membrane. Its function is as follows. Required for the export of mRNAs containing poly(A) tails from the nucleus into the cytoplasm. In terms of biological role, (Microbial infection) In case of infection by HIV-1, it may participate in the docking of viral Vpr at the nuclear envelope. The protein is Nucleoporin NUP42 of Homo sapiens (Human).